A 79-amino-acid chain; its full sequence is Cytochrome c oxidase assembly factor 6 homolog (79 aa).

In terms of domain architecture, CHCH spans 9–52 (RQACWGARDEYWKCLDENTEDASKCKKLRSSFESSCPQQWIKYF). A Cx9C motif motif is present at residues 12-22 (CWGARDEYWKC). Disulfide bonds link C12–C44 and C22–C33. The short motif at 33-44 (CKKLRSSFESSC) is the Cx10C motif element.

This sequence belongs to the cytochrome c oxidase subunit 6B family. In terms of assembly, found in a complex with TMEM177, COX20, MT-CO2/COX2, COX18, SCO1 and SCO2. Interacts with COA1, MT-CO2/COX2, SCO1, SCO2 and COX20. Interacts with COX20 in a MT-CO2/COX2- and COX18-dependent manner. Interacts with COX16.

The protein localises to the mitochondrion intermembrane space. In terms of biological role, involved in the maturation of the mitochondrial respiratory chain complex IV subunit MT-CO2/COX2. Thereby, may regulate early steps of complex IV assembly. Mitochondrial respiratory chain complex IV or cytochrome c oxidase is the component of the respiratory chain that catalyzes the transfer of electrons from intermembrane space cytochrome c to molecular oxygen in the matrix and as a consequence contributes to the proton gradient involved in mitochondrial ATP synthesis. May also be required for efficient formation of respiratory supercomplexes comprised of complexes III and IV. In Bos taurus (Bovine), this protein is Cytochrome c oxidase assembly factor 6 homolog (COA6).